Consider the following 344-residue polypeptide: Probable dual-specificity RNA methyltransferase RlmN (344 aa).

Glutamate 89 functions as the Proton acceptor in the catalytic mechanism. A Radical SAM core domain is found at 95 to 329 (TDQRLTVCVS…VSLRASRGLD (235 aa)). A disulfide bridge links cysteine 102 with cysteine 334. Residues cysteine 109, cysteine 113, and cysteine 116 each coordinate [4Fe-4S] cluster. S-adenosyl-L-methionine contacts are provided by residues 156–157 (GE), serine 186, 215–217 (SLH), and asparagine 291. Cysteine 334 (S-methylcysteine intermediate) is an active-site residue.

Belongs to the radical SAM superfamily. RlmN family. [4Fe-4S] cluster serves as cofactor.

The protein localises to the cytoplasm. It catalyses the reaction adenosine(2503) in 23S rRNA + 2 reduced [2Fe-2S]-[ferredoxin] + 2 S-adenosyl-L-methionine = 2-methyladenosine(2503) in 23S rRNA + 5'-deoxyadenosine + L-methionine + 2 oxidized [2Fe-2S]-[ferredoxin] + S-adenosyl-L-homocysteine. The catalysed reaction is adenosine(37) in tRNA + 2 reduced [2Fe-2S]-[ferredoxin] + 2 S-adenosyl-L-methionine = 2-methyladenosine(37) in tRNA + 5'-deoxyadenosine + L-methionine + 2 oxidized [2Fe-2S]-[ferredoxin] + S-adenosyl-L-homocysteine. Its function is as follows. Specifically methylates position 2 of adenine 2503 in 23S rRNA and position 2 of adenine 37 in tRNAs. This chain is Probable dual-specificity RNA methyltransferase RlmN, found in Parasynechococcus marenigrum (strain WH8102).